Here is a 793-residue protein sequence, read N- to C-terminus: Neurobeachin (793 aa).

Disordered regions lie at residues glutamate 68 to lysine 92 and arginine 685 to lysine 793. Polar residues-rich tracts occupy residues asparagine 77 to glycine 90, arginine 689 to threonine 710, asparagine 750 to glycine 762, and glutamate 782 to lysine 793.

The protein belongs to the WD repeat neurobeachin family. As to quaternary structure, interacts with RII subunit of PKA. Forebrain and cerebellum.

The protein resides in the cytoplasm. It is found in the membrane. In terms of biological role, binds to type II regulatory subunits of protein kinase A and anchors/targets them to the membrane. May anchor the kinase to cytoskeletal and/or organelle-associated proteins. The sequence is that of Neurobeachin (NBEA) from Gallus gallus (Chicken).